Consider the following 158-residue polypeptide: C-type lectin galactose-binding isoform (158 aa).

An N-terminal signal peptide occupies residues 1 to 20; the sequence is MGRFLLVTLSLLVVAFSLNG. Intrachain disulfides connect C26–C37, C54–C154, and C129–C146. The 123-residue stretch at 33 to 155 folds into the C-type lectin domain; sequence KNGYCYKVFK…CTALRPFLCQ (123 aa). Residues Q119, D121, E127, N142, and D143 each contribute to the Ca(2+) site. The short motif at 119–121 is the Galactose-binding element; that stretch reads QPD.

Belongs to the true venom lectin family. Homodimer; disulfide-linked. As to expression, expressed by the venom gland.

Its subcellular location is the secreted. Its function is as follows. Galactose-binding lectin that binds to and agglutinates erythrocytes in a calcium-dependent manner. The polypeptide is C-type lectin galactose-binding isoform (Hoplocephalus stephensii (Stephens's banded snake)).